The sequence spans 217 residues: NADPH-dependent 3-demethoxyubiquinone 3-hydroxylase, mitochondrial (217 aa).

The transit peptide at 1-34 (MSCARALAACCLWRLRTGALQPLSAYGRRISVRF) directs the protein to the mitochondrion. 2 repeat units span residues 48–129 (AVDR…TALL) and 130–217 (GKEG…SERL). The 2 X approximate tandem repeats stretch occupies residues 48–217 (AVDRIIRVDH…KVAIYLSERL (170 aa)). Arg51 serves as a coordination point for NADH. Glu60, Glu90, His93, Glu142, Glu178, and His181 together coordinate Fe cation. NADH contacts are provided by Lys208, Tyr212, and Arg216.

This sequence belongs to the COQ7 family. In terms of assembly, component of a multi-subunit COQ enzyme complex. Interacts with COQ8B and COQ6. Interacts with COQ9. Requires Fe cation as cofactor.

The protein localises to the mitochondrion inner membrane. The enzyme catalyses a 5-methoxy-2-methyl-3-(all-trans-polyprenyl)benzoquinone + NADH + O2 = a 3-demethylubiquinone + NAD(+) + H2O. Its pathway is cofactor biosynthesis; ubiquinone biosynthesis. Catalyzes the hydroxylation of the 5-methoxy-2-methyl-3-(all-trans-polyprenyl)benzoquinone at the C6 position and participates in the biosynthesis of ubiquinone. Catalyzes the reaction through a substrate-mediated reduction pathway, whereby NADH shuttles electrons to 5-methoxy-2-methyl-3-(all-trans-decaprenyl)benzoquinone, which then transfers the electrons to the two Fe(3+) centers. The binding of 5-methoxy-2-methyl-3-(all-trans-polyprenyl)benzoquinone (DMQn) mediates reduction of the diiron center by nicotinamide adenine dinucleotide (NADH) and initiates oxygen activation for subsequent DMQ hydroxylation. The physiological substrates are 5-methoxy-2-methyl-3-(all-trans-nonaprenyl)benzoquinone (DMQ(9)) and 5-methoxy-2-methyl-3-(all-trans-decaprenyl)benzoquinone (DMQ(10)), however in vitro the enzyme does not have any specificity concerning the length of the polyprenyl tail, and accepts tails of various lengths with similar efficiency. Also has a structural role in the COQ enzyme complex, stabilizing other COQ polypeptides. Involved in lifespan determination in a ubiquinone-independent manner. Plays a role in modulating mitochondrial stress responses, acting in the nucleus, perhaps via regulating gene expression, independent of its characterized mitochondrial function in ubiquinone biosynthesis. In Bos taurus (Bovine), this protein is NADPH-dependent 3-demethoxyubiquinone 3-hydroxylase, mitochondrial.